We begin with the raw amino-acid sequence, 329 residues long: Short-chain dehydrogenase/reductase prx4 (329 aa).

Residues 1–21 form the signal peptide; it reads MIPRWQPASIALLLHLDTLRC. Residues serine 58, isoleucine 60, and asparagine 81 each coordinate NADP(+). Asparagine 91 is a glycosylation site (N-linked (GlcNAc...) asparagine). NADP(+) is bound by residues aspartate 98, asparagine 121, lysine 161, tyrosine 194, lysine 198, and threonine 229. The active-site Proton acceptor is tyrosine 194. Lysine 198 acts as the Lowers pKa of active site Tyr in catalysis. A helical membrane pass occupies residues 238 to 258; it reads GPLMAAGLPVSSAHMVGLAVV.

The protein belongs to the short-chain dehydrogenases/reductases (SDR) family.

It localises to the membrane. Its pathway is sesquiterpene biosynthesis. Functionally, short-chain dehydrogenase/reductase; part of the gene cluster that mediates the biosynthesis of PR-toxin, a bicyclic sesquiterpene belonging to the eremophilane class and acting as a mycotoxin. The first step of the pathway is catalyzed by the aristolochene synthase which performs the cyclization of trans,trans-farnesyl diphosphate (FPP) to the bicyclic sesquiterpene aristolochene. Following the formation of aristolochene, the non-oxygenated aristolochene is converted to the trioxygenated intermediate eremofortin B, via 7-epi-neopetasone. This conversion appears to involve three enzymes, a hydroxysterol oxidase-like enzyme, the quinone-oxidase prx3 that forms the quinone-type-structure in the bicyclic nucleus of aristolochene with the C8-oxo group and the C-3 hydroxyl group, and the P450 monooxygenase prx9 that introduces the epoxide at the double bond between carbons 1 and 2. No monoxy or dioxy-intermediates have been reported to be released to the broth, so these three early oxidative reactions may be coupled together. Eremofortin B is further oxidized by another P450 monooxygenase, that introduces a second epoxide between carbons 7 and 11 prior to acetylation to eremofortin A by the acetyltransferase prx11. The second epoxidation may be performed by a second P450 monooxygenase. After the acetylation step, eremofortin A is converted to eremofortin C and then to PR-toxin. First the conversion of eremofortin A to eremofortin C proceeds by oxidation of the side chain of the molecule at C-12 and is catalyzed by the short-chain oxidoreductase prx1. The cytochrome P450 monooxygenase prx8 also plays a role in this step. The primary alcohol formed at C-12 is finally oxidized by the short-chain alcohol dehydrogenase prx4 that forms PR-toxin. The chain is Short-chain dehydrogenase/reductase prx4 from Penicillium rubens (strain ATCC 28089 / DSM 1075 / NRRL 1951 / Wisconsin 54-1255) (Penicillium chrysogenum).